Consider the following 523-residue polypeptide: WD repeat-containing protein YPL247C (523 aa).

The interval 1–64 (MDPFHNGNKR…TTNGGNSKRN (64 aa)) is disordered. The segment covering 9 to 40 (KRSSISFGSSQRQPYNKNNYLSGTNGPSSAAQ) has biased composition (polar residues). Residue Ser47 is modified to Phosphoserine. The segment covering 52 to 64 (SGNTTNGGNSKRN) has biased composition (low complexity). Ser65 is subject to Phosphoserine. WD repeat units lie at residues 173–213 (DVVY…RQFQ), 241–281 (GTFP…YVKT), 285–325 (AHDS…HSTI), and 392–432 (GHGS…MEIN). A disordered region spans residues 436–472 (SKSPSIHGTSLEDPDGDTEMTDGGAGSGLNEDPLSLN).

Belongs to the WD repeat WDR68 family.

It localises to the cytoplasm. The protein localises to the nucleus. The polypeptide is WD repeat-containing protein YPL247C (Saccharomyces cerevisiae (strain ATCC 204508 / S288c) (Baker's yeast)).